The sequence spans 284 residues: Bifunctional protein FolD (284 aa).

NADP(+)-binding positions include Gly166–Ser168 and Ile232.

The protein belongs to the tetrahydrofolate dehydrogenase/cyclohydrolase family. Homodimer.

It carries out the reaction (6R)-5,10-methylene-5,6,7,8-tetrahydrofolate + NADP(+) = (6R)-5,10-methenyltetrahydrofolate + NADPH. It catalyses the reaction (6R)-5,10-methenyltetrahydrofolate + H2O = (6R)-10-formyltetrahydrofolate + H(+). It participates in one-carbon metabolism; tetrahydrofolate interconversion. Catalyzes the oxidation of 5,10-methylenetetrahydrofolate to 5,10-methenyltetrahydrofolate and then the hydrolysis of 5,10-methenyltetrahydrofolate to 10-formyltetrahydrofolate. This is Bifunctional protein FolD from Shewanella sediminis (strain HAW-EB3).